A 344-amino-acid polypeptide reads, in one-letter code: Protein BREVIS RADIX (344 aa).

The 56-residue stretch at 139–194 (KEWMAQVEPGVHITFASLPTGGNDLKRIRFSREMFDKWQAQRWWGENYDKIVELYN) folds into the BRX 1 domain. Positions 203 to 286 (LQTPARSDDQ…DPPSMSNASE (84 aa)) are disordered. Over residues 223-233 (DSARESKDWTP) the composition is skewed to basic and acidic residues. Positions 248-264 (YGGSSNYGPGSYHGGPP) are enriched in low complexity. Positions 289–344 (AEWIEEDEPGVYITIRQLSDGTRELRRVRFSRERFGEVHAKTWWEQNRERIQTQYL) constitute a BRX 2 domain.

Belongs to the BRX family. Homodimer and heterodimer with BRXL1. Interacts with NGA1 and ARF5. As to expression, expressed in the developing protophloem up to the elongation zone in root meristem of young seedlings, in the columella and the phloem vasculature throughout the root and in the phloem vasculature in the shoot. Detected in the shoot meristem and in primordia. Low expression in stomata. Confined to sieve element precursor cells and to protophloem.

The protein localises to the nucleus. Its subcellular location is the cell membrane. In terms of biological role, acts as a regulator of cell proliferation and elongation in the root and shoot. Regulates roots architecture and primary root protophloem differentiation. BRX, BAM3, and CLE45 act together to regulate the transition of protophloem cells from proliferation to differentiation, thus impinging on postembryonic growth capacity of the root meristem. Probable transcription regulator. Regulated by the auxin response factor ARF5. Polarly localized in vascular cells and subject to endocytic recycling. Required for CPD expression and for correct nuclear auxin response. Mediates cross-talk between the auxin and brassinosteroid pathways. BRX is a target for auxin-induced, proteasome-mediated degradation. The chain is Protein BREVIS RADIX from Arabidopsis thaliana (Mouse-ear cress).